Consider the following 235-residue polypeptide: Thiamine import ATP-binding protein ThiQ (235 aa).

The region spanning 2–230 (LKLIDITWLY…QASASALLGI (229 aa)) is the ABC transporter domain. Position 32–39 (32–39 (GPSGAGKS)) interacts with ATP.

The protein belongs to the ABC transporter superfamily. Thiamine importer (TC 3.A.1.19.1) family. As to quaternary structure, the complex is composed of two ATP-binding proteins (ThiQ), two transmembrane proteins (ThiP) and a solute-binding protein (ThiB).

It is found in the cell inner membrane. It catalyses the reaction thiamine(out) + ATP + H2O = thiamine(in) + ADP + phosphate + H(+). Its function is as follows. Part of the ABC transporter complex ThiBPQ involved in thiamine import. Responsible for energy coupling to the transport system. The polypeptide is Thiamine import ATP-binding protein ThiQ (Salmonella choleraesuis (strain SC-B67)).